We begin with the raw amino-acid sequence, 264 residues long: [LysW]-aminoadipate/[LysW]-glutamate kinase (264 aa).

Substrate is bound by residues 35 to 36, arginine 62, and asparagine 167; that span reads GG.

This sequence belongs to the acetylglutamate kinase family. LysZ subfamily.

Its subcellular location is the cytoplasm. It catalyses the reaction [amino-group carrier protein]-C-terminal-N-(1,4-dicarboxybutan-1-yl)-L-glutamine + ATP = [amino-group carrier protein]-C-terminal-N-(1-carboxy-5-phosphooxy-5-oxopentan-1-yl)-L-glutamine + ADP. It carries out the reaction [amino-group carrier protein]-C-terminal-gamma-(L-glutamyl)-L-glutamate + ATP = [amino-group carrier protein]-C-terminal-gamma-(5-phospho-L-glutamyl)-L-glutamate + ADP. Its pathway is amino-acid biosynthesis; L-lysine biosynthesis via AAA pathway; L-lysine from L-alpha-aminoadipate (Thermus route): step 2/5. The protein operates within amino-acid biosynthesis; L-arginine biosynthesis. Its function is as follows. Involved in both the arginine and lysine biosynthetic pathways. Phosphorylates the LysW-bound precursors glutamate (for arginine biosynthesis), respectively alpha-aminoadipate (for lysine biosynthesis). This chain is [LysW]-aminoadipate/[LysW]-glutamate kinase, found in Saccharolobus islandicus (strain Y.N.15.51 / Yellowstone #2) (Sulfolobus islandicus).